A 200-amino-acid chain; its full sequence is Phospholipase A2 inhibitor LNF2 (200 aa).

The first 19 residues, 1–19 (MKSLHTICLLFIFVARGNS), serve as a signal peptide directing secretion. 8 cysteine pairs are disulfide-bonded: C22-C46, C25-C32, C39-C67, C73-C94, C95-C100, C118-C143, C136-C165, and C169-C191. Residue N176 is glycosylated (N-linked (GlcNAc...) asparagine).

It belongs to the CNF-like-inhibitor family. In terms of assembly, occurs as a mixture of oligomers. Tetrameric arrangement appears to be the predominant quaternary structure. In terms of tissue distribution, expressed by the liver.

Its subcellular location is the secreted. Inhibits the enzymatic activity of phospholipase A2 (PA2). This Lachesis muta muta (Bushmaster) protein is Phospholipase A2 inhibitor LNF2.